The chain runs to 237 residues: MEESVNPTIQLGPVTFNLTLLAMSLLAVLLVFAFVYWASRKMTLKPSGKQNALEYLYDFVIDFTKGNIGSKYMKNYSLFLFSLFLFLVVANNLGLMAKLQTTSGENLWTSPTANIAFDLSMSFLITLICHVEGIRRRGFKKYLKAFVTPGFMTPMNILEEFTNFASLALRIYGNIFAGEVLSGLLVTLSHQAVFYYPLAFGLNLVWTAFSVFISCVQAYVFTMLTSMYLGKKINGEE.

The next 5 helical transmembrane spans lie at 18-38 (LTLLAMSLLAVLLVFAFVYWA), 77-97 (SLFLFSLFLFLVVANNLGLMA), 114-134 (NIAFDLSMSFLITLICHVEGI), 167-187 (LALRIYGNIFAGEVLSGLLVT), and 208-230 (AFSVFISCVQAYVFTMLTSMYLG).

The protein belongs to the ATPase A chain family. F-type ATPases have 2 components, CF(1) - the catalytic core - and CF(0) - the membrane proton channel. CF(1) has five subunits: alpha(3), beta(3), gamma(1), delta(1), epsilon(1). CF(0) has three main subunits: a(1), b(2) and c(9-12). The alpha and beta chains form an alternating ring which encloses part of the gamma chain. CF(1) is attached to CF(0) by a central stalk formed by the gamma and epsilon chains, while a peripheral stalk is formed by the delta and b chains.

Its subcellular location is the cell membrane. Its function is as follows. Key component of the proton channel; it plays a direct role in the translocation of protons across the membrane. This is ATP synthase subunit a from Streptococcus gordonii (strain Challis / ATCC 35105 / BCRC 15272 / CH1 / DL1 / V288).